Reading from the N-terminus, the 504-residue chain is Amphoterin-induced protein 3 (504 aa).

A signal peptide spans 1–19 (MTWLVLLGTLLCMLRVGLG). The Extracellular segment spans residues 20-383 (TPDSEGFPPR…PRPEPEAFNT (364 aa)). One can recognise an LRRNT domain in the interval 25 to 61 (GFPPRALHNCPYKCICAADLLSCTGLGLQDVPAELPA). 2 disulfides stabilise this stretch: C34–C40 and C38–C47. LRR repeat units follow at residues 62–83 (ATADLDLSHNALQRLRPGWLAP), 86–107 (QLRALHLDHNELDALGRGVFVN), 110–133 (GLRLLDLSSNTLRALGRHDLDGLG), 134–155 (ALEKLLLFNNRLVHLDEHAFHG), 158–178 (ALSHLYLGCNELASFSFDHLH), and 184–207 (HLLTLDLSSNRLGHISVPELAALP). N-linked (GlcNAc...) asparagine glycosylation occurs at N107. Residues 219 to 275 (NPLPCDCRLYHLLQRWHQRGLSAVRDFAREYVCLAFKVPASRVRFFQHSRVFENCSS) form the LRRCT domain. 3 disulfides stabilise this stretch: C223–C251, C225–C273, and C300–C352. 4 N-linked (GlcNAc...) asparagine glycosylation sites follow: N272, N301, N362, and N368. In terms of domain architecture, Ig-like C2-type spans 277–370 (PALGLERPEE…HNQTHEYNVS (94 aa)). Residues 384–404 (GFTTLLGCAVGLVLVLLYLFA) form a helical membrane-spanning segment. Residues 405–504 (PPCRCCRRAC…SIGSEGPMTT (100 aa)) are Cytoplasmic-facing. Residues 422 to 448 (TPSPLQELSAQSSVLSTTPPDAPSRKA) are disordered. The segment covering 424-440 (SPLQELSAQSSVLSTTP) has biased composition (polar residues).

This sequence belongs to the immunoglobulin superfamily. AMIGO family. Binds AMIGO1 or AMIGO2.

It localises to the membrane. Its function is as follows. May mediate heterophilic cell-cell interaction. May contribute to signal transduction through its intracellular domain. This is Amphoterin-induced protein 3 from Homo sapiens (Human).